The following is an 812-amino-acid chain: Probable beta-glucosidase D (812 aa).

An N-terminal signal peptide occupies residues 1-18 (MRVPSLSVLSFLLGTALA). N-linked (GlcNAc...) asparagine glycans are attached at residues Asn-53 and Asn-188. The segment at 186–248 (ETNRTGGMGG…GMGGGMAGSS (63 aa)) is disordered. Residues 191 to 207 (GGMGGGGGAPGGGGMGR) are compositionally biased toward gly residues. The span at 211–225 (FSSSVPGGMSPTSSA) shows a compositional bias: polar residues. The segment covering 236 to 245 (GGSGMGGGMA) has biased composition (gly residues). N-linked (GlcNAc...) asparagine glycosylation is present at Asn-296. Residue Asp-324 is part of the active site. N-linked (GlcNAc...) asparagine glycosylation is found at Asn-360, Asn-384, Asn-422, Asn-501, Asn-592, and Asn-646.

Belongs to the glycosyl hydrolase 3 family.

Its subcellular location is the secreted. It carries out the reaction Hydrolysis of terminal, non-reducing beta-D-glucosyl residues with release of beta-D-glucose.. The protein operates within glycan metabolism; cellulose degradation. Beta-glucosidases are one of a number of cellulolytic enzymes involved in the degradation of cellulosic biomass. Catalyzes the last step releasing glucose from the inhibitory cellobiose. The sequence is that of Probable beta-glucosidase D (bglD) from Emericella nidulans (strain FGSC A4 / ATCC 38163 / CBS 112.46 / NRRL 194 / M139) (Aspergillus nidulans).